The primary structure comprises 665 residues: MPRRAPAFPLSDIKAQMLFANNIKAQQASKRSFKEGAIETYEGLLSVDPRFLSFKNELSRYLTDHFPANVDEYGRVYGNGVRTNFFGMRHMNGFPMIPATWPLASNLKKRADADLADGPVSERDNLLFRAAVRLMFSDLEPVPLKIRKGSSTCIPYFSNDMGTKIEIAERALEKAEEAGNLMLQGKFDDAYQLHQMGGAYYVVYRAQSTDAITLDPKTGKFVSKDRMVADFEYAVTGGEQGSLFAASKDASRLKEQYGIDVPDGFFCERRRTAMGGPFALNAPIMAVAQPVRNKIYSKYAYTFHHTTRLNKEEKVKEWSLCVATDVSDHDTFWPGWLRDLICDELLNMGYAPWWVKLFETSLKLPVYVGAPAPEQGHTLLGDPSNPDLEVGLSSGQGATDLMGTLLMSITYLVMQLDHTAPHLNSRIKDMPSACRFLDSYWQGHEEIRQISKSDDAILGWTKGRALVGGHRLFEMLKEGKVNPSPYMKISYEHGGAFLGDILLYDSRREPGSAIFVGNINSMLNNQFSPEYGVQSGVRDRSKRKRPFPGLAWASMKDTYGACPIYSDVLEAIERCWWNAFGESYRAYREDMLKRDTLELSRYVASMARQAGLAELTPIDLEVLADPNKLQYKWTEADVSANIHEVLMHGVSVEKTERFLRSVMPR.

The region spanning 310 to 485 (NKEEKVKEWS…LKEGKVNPSP (176 aa)) is the RdRp catalytic domain. Residues Asp454, Tyr491, and Gly495 each coordinate Mg(2+).

In terms of assembly, part of the packaging complex composed of RDRP, P4 and P7. Interacts with P7. It depends on Mg(2+) as a cofactor. The cofactor is Mn(2+).

The protein resides in the virion. The catalysed reaction is RNA(n) + a ribonucleoside 5'-triphosphate = RNA(n+1) + diphosphate. Functionally, rna-dependent RNA polymerase part of the packaging complex that packages the viral RNA segments, replicate them into a double-stranded form and transcribe them. This Pseudomonas phage phi6 (Bacteriophage phi-6) protein is RNA-directed RNA polymerase (P2).